The chain runs to 452 residues: GTPase Der (452 aa).

EngA-type G domains are found at residues 4–169 and 177–352; these read PVVA…PPQD and IQMA…EQHR. GTP-binding positions include 10 to 17, 57 to 61, 120 to 123, 183 to 190, 230 to 234, and 295 to 298; these read GRPNVGKS, DTGGL, NKCE, DTAGI, and NKWD. In terms of domain architecture, KH-like spans 353–438; sequence RRVTTAVVNE…PVRLFWRGKQ (86 aa).

This sequence belongs to the TRAFAC class TrmE-Era-EngA-EngB-Septin-like GTPase superfamily. EngA (Der) GTPase family. Associates with the 50S ribosomal subunit.

GTPase that plays an essential role in the late steps of ribosome biogenesis. This is GTPase Der from Synechococcus sp. (strain RCC307).